A 692-amino-acid polypeptide reads, in one-letter code: 5-taurinomethyluridine-[tRNA] synthase subunit MTO1, mitochondrial (692 aa).

Residues methionine 1–leucine 25 constitute a mitochondrion transit peptide. FAD-binding positions include glycine 43–glycine 48, valine 155, serine 218, and glutamine 407. N6-methyllysine is present on lysine 508. Residues alanine 669–leucine 692 are disordered. The segment covering asparagine 683 to leucine 692 has biased composition (basic and acidic residues).

This sequence belongs to the MnmG family. Homodimer; forms a dimer in the presence of potassium. Interacts with GTPBP3; forms the GTPBP3-MTO1 complex composed of homodimers of GTPBP3 and MTO1. It depends on FAD as a cofactor.

It localises to the mitochondrion. It catalyses the reaction 5,10-methylenetetrahydrofolate + uridine(34) in tRNA + taurine + GTP + A + H2O = 5-taurinomethyluridine(34) in tRNA + 7,8-dihydrofolate + GDP + AH2 + phosphate + H(+). Component of the GTPBP3-MTO1 complex that catalyzes the 5-taurinomethyluridine (taum(5)U) modification at the 34th wobble position (U34) of mitochondrial tRNAs (mt-tRNAs), which plays a role in mt-tRNA decoding and mitochondrial translation. Taum(5)U formation on mammalian mt-tRNA requires the presence of both GTPBP3-mediated GTPase activity and MTO1 catalytic activity. The chain is 5-taurinomethyluridine-[tRNA] synthase subunit MTO1, mitochondrial (MTO1) from Macaca fascicularis (Crab-eating macaque).